Reading from the N-terminus, the 206-residue chain is Thymidylate kinase (206 aa).

14 to 21 (GGEGIGKS) serves as a coordination point for ATP.

It belongs to the thymidylate kinase family.

It carries out the reaction dTMP + ATP = dTDP + ADP. Phosphorylation of dTMP to form dTDP in both de novo and salvage pathways of dTTP synthesis. This Rickettsia bellii (strain RML369-C) protein is Thymidylate kinase.